The sequence spans 179 residues: METNKPTLYWSLLMFKDWNFYIASTLKGLVFVGSQNKPIEELFEWARKRFPGSLLVEDDDKLEPYAVEITQYLEGKRKNFTVPVEYAGTQFQLAVWNALCEIPYGQTKSYSDIANDINKPAAVRAVGAAIGANPVLITVPCHRVIGKNGSLTGYRGGFEMKTLLLDLEKRASSEMDVPH.

The active-site Nucleophile; methyl group acceptor is Cys141.

Belongs to the MGMT family.

It carries out the reaction a 6-O-methyl-2'-deoxyguanosine in DNA + L-cysteinyl-[protein] = S-methyl-L-cysteinyl-[protein] + a 2'-deoxyguanosine in DNA. The enzyme catalyses a 4-O-methyl-thymidine in DNA + L-cysteinyl-[protein] = a thymidine in DNA + S-methyl-L-cysteinyl-[protein]. Involved in the cellular defense against the biological effects of O6-methylguanine (O6-MeG) and O4-methylthymine (O4-MeT) in DNA. Repairs the methylated nucleobase in DNA by stoichiometrically transferring the methyl group to a cysteine residue in the enzyme. This is a suicide reaction: the enzyme is irreversibly inactivated. The protein is Methylated-DNA--protein-cysteine methyltransferase, inducible (adaB) of Bacillus subtilis (strain 168).